Consider the following 320-residue polypeptide: Acetyl-coenzyme A carboxylase carboxyl transferase subunit alpha (320 aa).

The CoA carboxyltransferase C-terminal domain maps to 42–295; the sequence is IEEKALAALT…GDAIAKSFAD (254 aa).

This sequence belongs to the AccA family. As to quaternary structure, acetyl-CoA carboxylase is a heterohexamer composed of biotin carboxyl carrier protein (AccB), biotin carboxylase (AccC) and two subunits each of ACCase subunit alpha (AccA) and ACCase subunit beta (AccD).

It is found in the cytoplasm. The enzyme catalyses N(6)-carboxybiotinyl-L-lysyl-[protein] + acetyl-CoA = N(6)-biotinyl-L-lysyl-[protein] + malonyl-CoA. It functions in the pathway lipid metabolism; malonyl-CoA biosynthesis; malonyl-CoA from acetyl-CoA: step 1/1. Its function is as follows. Component of the acetyl coenzyme A carboxylase (ACC) complex. First, biotin carboxylase catalyzes the carboxylation of biotin on its carrier protein (BCCP) and then the CO(2) group is transferred by the carboxyltransferase to acetyl-CoA to form malonyl-CoA. This is Acetyl-coenzyme A carboxylase carboxyl transferase subunit alpha from Rhodopseudomonas palustris (strain BisA53).